A 937-amino-acid polypeptide reads, in one-letter code: Chaperone protein ClpD2, chloroplastic (937 aa).

The N-terminal 80 residues, methionine 1–lysine 80, are a transit peptide targeting the chloroplast. 2 repeat regions span residues alanine 81–glutamate 137 and phenylalanine 152–glutamate 217. One can recognise a Clp R domain in the interval alanine 81 to glutamate 217. An i region spans residues leucine 259–glutamate 513. ATP is bound by residues glycine 304 to threonine 311 and glycine 658 to threonine 665. The interval valine 584 to serine 775 is II.

It belongs to the ClpA/ClpB family. ClpD subfamily. As to expression, highly expressed in stems, culms and leaves.

The protein localises to the plastid. The protein resides in the chloroplast. Molecular chaperone that may interact with a ClpP-like protease involved in degradation of denatured proteins in the chloroplast. The sequence is that of Chaperone protein ClpD2, chloroplastic (CLPD2) from Oryza sativa subsp. japonica (Rice).